Reading from the N-terminus, the 218-residue chain is rRNA methyltransferase 2, mitochondrial (218 aa).

S-adenosyl-L-methionine contacts are provided by residues 59-62 (PGSW), Asp-80, 96-97 (DI), and Asp-133. The active-site Proton acceptor is the Lys-173.

Belongs to the class I-like SAM-binding methyltransferase superfamily. RNA methyltransferase RlmE family.

The protein resides in the mitochondrion. The catalysed reaction is a uridine in 21S rRNA + S-adenosyl-L-methionine = a 2'-O-methyluridine in 21S rRNA + S-adenosyl-L-homocysteine + H(+). S-adenosyl-L-methionine-dependent 2'-O-ribose methyltransferase that catalyzes the formation of the 2'-O-methyluridine corresponding to position 2791 in S.cerevisiae 21S mitochondrial large subunit ribosomal RNA (mtLSU rRNA), a universally conserved modification in the peptidyl transferase domain of the mtLSU rRNA. In Schizosaccharomyces pombe (strain 972 / ATCC 24843) (Fission yeast), this protein is rRNA methyltransferase 2, mitochondrial.